Reading from the N-terminus, the 260-residue chain is Putative ABC transporter ATP-binding protein SCO3161 (260 aa).

Residues 16 to 246 (LDVSGLAFAY…DDLMRAHRLE (231 aa)) enclose the ABC transporter domain. 49-56 (GPNGAGKT) contacts ATP.

The protein belongs to the ABC transporter superfamily.

The protein localises to the cell membrane. In terms of biological role, probably part of an ABC transporter complex. Responsible for energy coupling to the transport system. This Streptomyces coelicolor (strain ATCC BAA-471 / A3(2) / M145) protein is Putative ABC transporter ATP-binding protein SCO3161.